A 252-amino-acid polypeptide reads, in one-letter code: Phosphate import ATP-binding protein PstB (252 aa).

An ABC transporter domain is found at 5–247; it reads LIASDVNIFY…PRDERTEAYV (243 aa). Position 37-44 (37-44) interacts with ATP; sequence GPSGCGKT.

This sequence belongs to the ABC transporter superfamily. Phosphate importer (TC 3.A.1.7) family. In terms of assembly, the complex is composed of two ATP-binding proteins (PstB), two transmembrane proteins (PstC and PstA) and a solute-binding protein (PstS).

The protein localises to the cell membrane. The catalysed reaction is phosphate(out) + ATP + H2O = ADP + 2 phosphate(in) + H(+). In terms of biological role, part of the ABC transporter complex PstSACB involved in phosphate import. Responsible for energy coupling to the transport system. The polypeptide is Phosphate import ATP-binding protein PstB (Deinococcus geothermalis (strain DSM 11300 / CIP 105573 / AG-3a)).